The sequence spans 360 residues: D-alanine--D-alanine ligase (360 aa).

One can recognise an ATP-grasp domain in the interval 134–343 (KILAQRVGVP…YTELITRLIE (210 aa)). 169–224 (AEKLGRDMFVKPSNQGSSVGVSHVTNADEYAAALKEAFKYDDKVLVEETVPGTEVE) contributes to the ATP binding site. 3 residues coordinate Mg(2+): Asp297, Glu310, and Asn312.

Belongs to the D-alanine--D-alanine ligase family. Requires Mg(2+) as cofactor. The cofactor is Mn(2+).

The protein localises to the cytoplasm. It carries out the reaction 2 D-alanine + ATP = D-alanyl-D-alanine + ADP + phosphate + H(+). It functions in the pathway cell wall biogenesis; peptidoglycan biosynthesis. Its function is as follows. Cell wall formation. This Lactobacillus helveticus (strain DPC 4571) protein is D-alanine--D-alanine ligase.